The sequence spans 293 residues: Pyridoxal 5'-phosphate synthase subunit PdxS (293 aa).

Position 23 (D23) interacts with D-ribose 5-phosphate. K80 (schiff-base intermediate with D-ribose 5-phosphate) is an active-site residue. G152 contacts D-ribose 5-phosphate. R164 contacts D-glyceraldehyde 3-phosphate. D-ribose 5-phosphate is bound by residues G213 and G234–S235.

It belongs to the PdxS/SNZ family. In terms of assembly, in the presence of PdxT, forms a dodecamer of heterodimers.

It catalyses the reaction aldehydo-D-ribose 5-phosphate + D-glyceraldehyde 3-phosphate + L-glutamine = pyridoxal 5'-phosphate + L-glutamate + phosphate + 3 H2O + H(+). It participates in cofactor biosynthesis; pyridoxal 5'-phosphate biosynthesis. In terms of biological role, catalyzes the formation of pyridoxal 5'-phosphate from ribose 5-phosphate (RBP), glyceraldehyde 3-phosphate (G3P) and ammonia. The ammonia is provided by the PdxT subunit. Can also use ribulose 5-phosphate and dihydroxyacetone phosphate as substrates, resulting from enzyme-catalyzed isomerization of RBP and G3P, respectively. The polypeptide is Pyridoxal 5'-phosphate synthase subunit PdxS (Dehalococcoides mccartyi (strain ATCC BAA-2266 / KCTC 15142 / 195) (Dehalococcoides ethenogenes (strain 195))).